A 584-amino-acid chain; its full sequence is A-type ATP synthase subunit A 2 (584 aa).

227–234 (GGFGTGKT) contacts ATP.

This sequence belongs to the ATPase alpha/beta chains family. Has multiple subunits with at least A(3), B(3), C, D, E, F, H, I and proteolipid K(x).

It is found in the cell membrane. It catalyses the reaction ATP + H2O + 4 H(+)(in) = ADP + phosphate + 5 H(+)(out). Its function is as follows. Component of the A-type ATP synthase that produces ATP from ADP in the presence of a proton gradient across the membrane. The A chain is the catalytic subunit. This Methanospirillum hungatei JF-1 (strain ATCC 27890 / DSM 864 / NBRC 100397 / JF-1) protein is A-type ATP synthase subunit A 2.